The following is a 233-amino-acid chain: Putative quercetin 2,3-dioxygenase PM1685 (233 aa).

A divalent metal cation-binding residues include His59, His61, His103, and Glu105.

Belongs to the pirin family. It depends on a divalent metal cation as a cofactor.

The enzyme catalyses quercetin + O2 = 2-(3,4-dihydroxybenzoyloxy)-4,6-dihydroxybenzoate + CO. It participates in flavonoid metabolism; quercetin degradation. Putative quercetin 2,3-dioxygenase. This Pasteurella multocida (strain Pm70) protein is Putative quercetin 2,3-dioxygenase PM1685.